The following is a 431-amino-acid chain: Adenylosuccinate lyase (431 aa).

N(6)-(1,2-dicarboxyethyl)-AMP contacts are provided by residues 4–5 (RY), 67–69 (RHD), and 93–94 (TS). Residue His141 is the Proton donor/acceptor of the active site. Gln212 is a N(6)-(1,2-dicarboxyethyl)-AMP binding site. Ser262 (proton donor/acceptor) is an active-site residue. N(6)-(1,2-dicarboxyethyl)-AMP-binding positions include Ser263, 268–270 (KRN), Asn276, and 307–311 (SAERI).

This sequence belongs to the lyase 1 family. Adenylosuccinate lyase subfamily. Homodimer and homotetramer. Residues from neighboring subunits contribute catalytic and substrate-binding residues to each active site.

The catalysed reaction is N(6)-(1,2-dicarboxyethyl)-AMP = fumarate + AMP. It catalyses the reaction (2S)-2-[5-amino-1-(5-phospho-beta-D-ribosyl)imidazole-4-carboxamido]succinate = 5-amino-1-(5-phospho-beta-D-ribosyl)imidazole-4-carboxamide + fumarate. It functions in the pathway purine metabolism; AMP biosynthesis via de novo pathway; AMP from IMP: step 2/2. The protein operates within purine metabolism; IMP biosynthesis via de novo pathway; 5-amino-1-(5-phospho-D-ribosyl)imidazole-4-carboxamide from 5-amino-1-(5-phospho-D-ribosyl)imidazole-4-carboxylate: step 2/2. Catalyzes two reactions in de novo purine nucleotide biosynthesis. Catalyzes the breakdown of 5-aminoimidazole- (N-succinylocarboxamide) ribotide (SAICAR or 2-[5-amino-1-(5-phospho-beta-D-ribosyl)imidazole-4-carboxamido]succinate) to 5-aminoimidazole-4-carboxamide ribotide (AICAR or 5-amino-1-(5-phospho-beta-D-ribosyl)imidazole-4-carboxamide) and fumarate, and of adenylosuccinate (ADS or N(6)-(1,2-dicarboxyethyl)-AMP) to adenosine monophosphate (AMP) and fumarate. In Staphylococcus saprophyticus subsp. saprophyticus (strain ATCC 15305 / DSM 20229 / NCIMB 8711 / NCTC 7292 / S-41), this protein is Adenylosuccinate lyase (purB).